Consider the following 238-residue polypeptide: tRNA (guanine-N(7)-)-methyltransferase (238 aa).

S-adenosyl-L-methionine is bound by residues Glu70, Asp95, Asp122, and Asp145. The active site involves Asp145. Substrate-binding positions include Lys149, Asp181, and 216–219; that span reads TKFE.

The protein belongs to the class I-like SAM-binding methyltransferase superfamily. TrmB family.

It carries out the reaction guanosine(46) in tRNA + S-adenosyl-L-methionine = N(7)-methylguanosine(46) in tRNA + S-adenosyl-L-homocysteine. It functions in the pathway tRNA modification; N(7)-methylguanine-tRNA biosynthesis. Catalyzes the formation of N(7)-methylguanine at position 46 (m7G46) in tRNA. In Neisseria meningitidis serogroup B (strain ATCC BAA-335 / MC58), this protein is tRNA (guanine-N(7)-)-methyltransferase.